A 262-amino-acid polypeptide reads, in one-letter code: Ribosomal RNA small subunit methyltransferase A (262 aa).

H16, L18, G43, E64, D89, and N109 together coordinate S-adenosyl-L-methionine.

Belongs to the class I-like SAM-binding methyltransferase superfamily. rRNA adenine N(6)-methyltransferase family. RsmA subfamily.

The protein localises to the cytoplasm. It carries out the reaction adenosine(1518)/adenosine(1519) in 16S rRNA + 4 S-adenosyl-L-methionine = N(6)-dimethyladenosine(1518)/N(6)-dimethyladenosine(1519) in 16S rRNA + 4 S-adenosyl-L-homocysteine + 4 H(+). Functionally, specifically dimethylates two adjacent adenosines (A1518 and A1519) in the loop of a conserved hairpin near the 3'-end of 16S rRNA in the 30S particle. May play a critical role in biogenesis of 30S subunits. The protein is Ribosomal RNA small subunit methyltransferase A of Xanthomonas oryzae pv. oryzae (strain MAFF 311018).